A 261-amino-acid chain; its full sequence is Large ribosomal subunit protein uL3 (261 aa).

The span at 138–148 shows a compositional bias: low complexity; it reads SVSHRSHGSTG. 2 disordered regions span residues 138-163 and 214-261; these read SVSH…KKMA and ADAP…GDQA. Q151 is modified (N5-methylglutamine). Residues 227–261 are compositionally biased toward low complexity; that stretch reads APTPVEAAADEAAPAEEPAVTEAPAAEATEAGDQA.

It belongs to the universal ribosomal protein uL3 family. As to quaternary structure, part of the 50S ribosomal subunit. Forms a cluster with proteins L14 and L19. Methylated by PrmB.

Functionally, one of the primary rRNA binding proteins, it binds directly near the 3'-end of the 23S rRNA, where it nucleates assembly of the 50S subunit. This is Large ribosomal subunit protein uL3 from Phenylobacterium zucineum (strain HLK1).